The sequence spans 803 residues: Bromodomain-containing protein 2 (803 aa).

Position 1 is an N-acetylmethionine (Met1). Residues 1–28 form a disordered region; it reads MLQNVTPHSKLPGEGNAGLLGLGPEAAA. A Phosphothreonine modification is found at Thr6. Ser37 carries the phosphoserine modification. The interval 53–73 is disordered; it reads ALQLTPANPPPPEVSNPKKPG. The Bromo 1 domain occupies 74 to 180; that stretch reads RVTNQLQYLH…KIFLQKVASM (107 aa). Positions 112, 155, 156, 157, 160, and 161 each coordinate a protein. Disordered stretches follow at residues 268-349, 456-653, and 739-803; these read PPAQ…LSEQ, EPLE…RQLS, and EKRL…SDSG. Over residues 285–298 the composition is skewed to low complexity; that stretch reads TTTPTPTAILAPGS. Phosphoserine occurs at positions 298, 301, and 305. Basic and acidic residues predominate over residues 316–332; it reads MRRESGRPIKPPRKDLP. Residues 344 to 453 form the Bromo 2 domain; sequence GKLSEQLKHC…DVFEFRYAKM (110 aa). A compositionally biased stretch (acidic residues) spans 481–515; it reads SSEESSSESSSEEDEEEDEEEEEEEEESESSDSEE. A compositionally biased stretch (basic residues) spans 545–567; sequence KPKRKREKKEKKKKRKAEKHRGR. Residues 556-560 carry the Nuclear localization signal motif; it reads KKKRK. Residues 634 to 716 enclose the NET domain; the sequence is DSEEEEESRP…SCLRKKPRKP (83 aa). Ser635 carries the phosphoserine modification. Residues 641 to 652 are compositionally biased toward basic and acidic residues; sequence SRPMSYDEKRQL. A compositionally biased stretch (low complexity) spans 777-797; that stretch reads SASSSSSDSSSSSSSSSSSDT.

Belongs to the BET family. Homodimer. Interacts with E2F1. Interacts with (acetylated) STAT3; promoting STAT3 recruitment to chromatin. Interacts with CTCF; promoting BRD2 recruitment to chromatin.

It is found in the nucleus. Its subcellular location is the chromosome. Its function is as follows. Chromatin reader protein that specifically recognizes and binds histone H4 acetylated at 'Lys-5' and 'Lys-12' (H4K5ac and H4K12ac, respectively), thereby controlling gene expression and remodeling chromatin structures. Recruits transcription factors and coactivators to target gene sites, and activates RNA polymerase II machinery for transcriptional elongation. Plays a key role in genome compartmentalization via its association with CTCF and cohesin: recruited to chromatin by CTCF and promotes formation of topologically associating domains (TADs) via its ability to bind acetylated histones, contributing to CTCF boundary formation and enhancer insulation. Also recognizes and binds acetylated non-histone proteins, such as STAT3. Involved in inflammatory response by regulating differentiation of naive CD4(+) T-cells into T-helper Th17: recognizes and binds STAT3 acetylated at 'Lys-87', promoting STAT3 recruitment to chromatin. In addition to acetylated lysines, also recognizes and binds lysine residues on histones that are both methylated and acetylated on the same side chain to form N6-acetyl-N6-methyllysine (Kacme), an epigenetic mark of active chromatin associated with increased transcriptional initiation. Specifically binds histone H4 acetyl-methylated at 'Lys-5' and 'Lys-12' (H4K5acme and H4K12acme, respectively). The sequence is that of Bromodomain-containing protein 2 (BRD2) from Canis lupus familiaris (Dog).